The chain runs to 780 residues: Alpha-xylosidase (780 aa).

4 N-linked (GlcNAc...) asparagine glycosylation sites follow: Asn-48, Asn-84, Asn-247, and Asn-298. Residues Asp-434 and Glu-437 contribute to the active site. Asn-443 carries N-linked (GlcNAc...) asparagine glycosylation. The active-site Proton donor is Asp-501. N-linked (GlcNAc...) asparagine glycosylation occurs at Asn-718.

This sequence belongs to the glycosyl hydrolase 31 family.

The protein localises to the secreted. The enzyme catalyses Hydrolysis of terminal, non-reducing alpha-D-xylose residues with release of alpha-D-xylose.. Catalyzes the liberation of alpha-xylose from the non-reducing terminal glucose of xyloglucan oligosaccharides. The sequence is that of Alpha-xylosidase from Emericella nidulans (strain FGSC A4 / ATCC 38163 / CBS 112.46 / NRRL 194 / M139) (Aspergillus nidulans).